We begin with the raw amino-acid sequence, 592 residues long: Arginine--tRNA ligase (592 aa).

The 'HIGH' region signature appears at 131–141 (ANPTGPMHVGH).

It belongs to the class-I aminoacyl-tRNA synthetase family. As to quaternary structure, monomer.

It localises to the cytoplasm. The catalysed reaction is tRNA(Arg) + L-arginine + ATP = L-arginyl-tRNA(Arg) + AMP + diphosphate. In Rhodospirillum rubrum (strain ATCC 11170 / ATH 1.1.1 / DSM 467 / LMG 4362 / NCIMB 8255 / S1), this protein is Arginine--tRNA ligase.